A 387-amino-acid chain; its full sequence is S-adenosylmethionine synthase (387 aa).

Histidine 15 contacts ATP. Residue aspartate 17 coordinates Mg(2+). Glutamate 43 is a binding site for K(+). L-methionine is bound by residues glutamate 56 and glutamine 99. Residues 99-109 (QSPDIALGVNR) form a flexible loop region. Residues 166–168 (DAK), 232–233 (RF), aspartate 241, 247–248 (RK), alanine 264, and lysine 268 each bind ATP. Position 241 (aspartate 241) interacts with L-methionine. Lysine 272 is an L-methionine binding site.

The protein belongs to the AdoMet synthase family. Homotetramer; dimer of dimers. The cofactor is Mg(2+). It depends on K(+) as a cofactor.

It is found in the cytoplasm. The catalysed reaction is L-methionine + ATP + H2O = S-adenosyl-L-methionine + phosphate + diphosphate. Its pathway is amino-acid biosynthesis; S-adenosyl-L-methionine biosynthesis; S-adenosyl-L-methionine from L-methionine: step 1/1. Its function is as follows. Catalyzes the formation of S-adenosylmethionine (AdoMet) from methionine and ATP. The overall synthetic reaction is composed of two sequential steps, AdoMet formation and the subsequent tripolyphosphate hydrolysis which occurs prior to release of AdoMet from the enzyme. This chain is S-adenosylmethionine synthase, found in Nitrosomonas eutropha (strain DSM 101675 / C91 / Nm57).